Here is a 294-residue protein sequence, read N- to C-terminus: 4-hydroxy-tetrahydrodipicolinate synthase (294 aa).

Serine 47 serves as a coordination point for pyruvate. Tyrosine 135 functions as the Proton donor/acceptor in the catalytic mechanism. Residue lysine 163 is the Schiff-base intermediate with substrate of the active site. Isoleucine 205 is a binding site for pyruvate.

The protein belongs to the DapA family. As to quaternary structure, homotetramer; dimer of dimers.

The protein resides in the cytoplasm. The catalysed reaction is L-aspartate 4-semialdehyde + pyruvate = (2S,4S)-4-hydroxy-2,3,4,5-tetrahydrodipicolinate + H2O + H(+). It participates in amino-acid biosynthesis; L-lysine biosynthesis via DAP pathway; (S)-tetrahydrodipicolinate from L-aspartate: step 3/4. Catalyzes the condensation of (S)-aspartate-beta-semialdehyde [(S)-ASA] and pyruvate to 4-hydroxy-tetrahydrodipicolinate (HTPA). The protein is 4-hydroxy-tetrahydrodipicolinate synthase of Ralstonia nicotianae (strain ATCC BAA-1114 / GMI1000) (Ralstonia solanacearum).